A 725-amino-acid chain; its full sequence is Ribonuclease R (725 aa).

The region spanning 236 to 559 is the RNB domain; the sequence is RKDLRDKLII…QLHRLIKQMV (324 aa). The 79-residue stretch at 611-689 folds into the S1 motif domain; it reads GKSLKAQIVS…NLGKVDVVLE (79 aa).

This sequence belongs to the RNR ribonuclease family. RNase R subfamily.

The protein localises to the cytoplasm. The catalysed reaction is Exonucleolytic cleavage in the 3'- to 5'-direction to yield nucleoside 5'-phosphates.. Its function is as follows. 3'-5' exoribonuclease that releases 5'-nucleoside monophosphates and is involved in maturation of structured RNAs. The chain is Ribonuclease R from Mycoplasmopsis pulmonis (strain UAB CTIP) (Mycoplasma pulmonis).